The primary structure comprises 700 residues: Calpain-2 catalytic subunit (700 aa).

The propeptide at 2-19 (AGMAAALAKERAAAAGAG) is anchors to the small subunit. Residues 45–344 (LFHDPSFPAG…YSRLEICNLT (300 aa)) form the Calpain catalytic domain. Residues Gly91 and Asp96 each contribute to the Ca(2+) site. The active site involves Cys105. Ca(2+)-binding residues include Glu175, Gln229, and Lys230. Active-site residues include His262 and Asn286. 3 residues coordinate Ca(2+): Glu292, Asp299, and Glu323. The interval 345-514 (PDTLASDRYK…KNANSTVIDD (170 aa)) is domain III. The interval 515 to 529 (EIEANFEETEIDEDD) is linker. The segment at 530–700 (IEPSFKKLFG…LINWLFFTVI (171 aa)) is domain IV. Ca(2+)-binding residues include Ala542, Asp545, Glu547, Glu552, Asp585, Asp587, Ser589, Lys591, Glu596, Asp615, Asp617, Ser619, Thr621, Glu626, Asp658, and Asn661. 2 EF-hand domains span residues 572–605 (FSIETCKIMVDLLDNDGSGKLGLKEFHTLWTKIQ) and 602–637 (TKIQKYQKIYREIDVDRSGTMNSYEMRRALEAAGFK). The EF-hand 3 domain occupies 667–700 (IRLETLYKMFRKLDTEKTGTIELNLINWLFFTVI).

Belongs to the peptidase C2 family. Forms a heterodimer with a small (regulatory) subunit (CAPNS1). Requires Ca(2+) as cofactor. Ubiquitous.

Its subcellular location is the cytoplasm. The protein localises to the cell membrane. The enzyme catalyses Broad endopeptidase specificity.. Its activity is regulated as follows. Activated by 200-1000 micromolar concentrations of calcium and inhibited by calpastatin. In terms of biological role, calcium-regulated non-lysosomal thiol-protease which catalyze limited proteolysis of substrates involved in cytoskeletal remodeling and signal transduction. The sequence is that of Calpain-2 catalytic subunit (CAPN2) from Gallus gallus (Chicken).